The following is a 271-amino-acid chain: TIP41-like protein (271 aa).

At Lys-106 the chain carries N6-acetyllysine. The segment at Arg-173–Glu-271 is interaction with PPP2CA. 2 positions are modified to phosphoserine: Ser-265 and Ser-270.

It belongs to the TIP41 family. Interacts with PPP2CA. Interacts with PPP2CB, PPP4C and PPP6C. Interacts with IGBP1; the interaction is dependent on PPP2CA. Associates with a protein phosphatase 2A PP2A(C):IGBP1 complex. Interacts with PPP4C and PPP4R2.

Its subcellular location is the cytoplasm. Its function is as follows. May be a allosteric regulator of serine/threonine-protein phosphatase 2A (PP2A). Inhibits catalytic activity of the PP2A(D) core complex in vitro. The PP2A(C):TIPRL complex does not show phosphatase activity. Acts as a negative regulator of serine/threonine-protein phosphatase 4 probably by inhibiting the formation of the active PPP4C:PPP4R2 complex; the function is proposed to implicate it in DNA damage response by promoting H2AX phosphorylated on Ser-140 (gamma-H2AX). May play a role in the regulation of ATM/ATR signaling pathway controlling DNA replication and repair. The chain is TIP41-like protein (Tiprl) from Mus musculus (Mouse).